Reading from the N-terminus, the 109-residue chain is Small ribosomal subunit protein uS10 (109 aa).

It belongs to the universal ribosomal protein uS10 family. In terms of assembly, part of the 30S ribosomal subunit.

In terms of biological role, involved in the binding of tRNA to the ribosomes. The sequence is that of Small ribosomal subunit protein uS10 from Nanoarchaeum equitans (strain Kin4-M).